A 219-amino-acid chain; its full sequence is Probable GTP-binding protein EngB (219 aa).

One can recognise an EngB-type G domain in the interval 24–207 (VQPEIAFAGR…HELIESWLRP (184 aa)). Residues 32-39 (GRSNAGKS), 59-63 (GRTQH), 81-84 (DLPG), 148-151 (TKCD), and 186-188 (FSA) contribute to the GTP site. Mg(2+) contacts are provided by Ser-39 and Thr-61.

It belongs to the TRAFAC class TrmE-Era-EngA-EngB-Septin-like GTPase superfamily. EngB GTPase family. Mg(2+) is required as a cofactor.

Functionally, necessary for normal cell division and for the maintenance of normal septation. The chain is Probable GTP-binding protein EngB from Burkholderia cenocepacia (strain HI2424).